The following is a 143-amino-acid chain: MNCSESQRLQTLLNRLLLELHHRGNASGLGIGTGPSMGMGVVPDPFVGREATSAKGNDAYLYILLIMIFYACLAGGLILAYTRSRKLVEAKDEPPLACVAEQEWVPAAIASADPENGQGLLAEGGHQLAAGALPALAQGAERV.

N-linked (GlcNAc...) asparagine glycosylation is found at asparagine 2 and asparagine 25. The helical transmembrane segment at 61–81 (LYILLIMIFYACLAGGLILAY) threads the bilayer. Residues 82–143 (TRSRKLVEAK…PALAQGAERV (62 aa)) are Cytoplasmic-facing.

The protein belongs to the potassium channel KCNE family. Interacts with KCNQ1; impairs KCNQ1 localization in lipid rafts and only conducts current upon strong and continued depolarization. Detected in embryonal dorsal root and nerve ganglia, in the somites and in myoepicardial layer of the developing heart wall. Detected at lower levels in the central nervous system (CNS) and in developing limb.

The protein localises to the membrane. In terms of biological role, potassium channel ancillary subunit that is essential for generation of some native K(+) currents by virtue of formation of heteromeric ion channel complex with voltage-gated potassium (Kv) channel pore-forming alpha subunits. Functions as an inhibitory beta-subunit of the repolarizing cardiac potassium ion channel KCNQ1. The chain is Potassium voltage-gated channel subfamily E regulatory beta subunit 5 (Kcne5) from Mus musculus (Mouse).